We begin with the raw amino-acid sequence, 169 residues long: Photosystem I assembly protein Ycf3 (169 aa).

TPR repeat units follow at residues 35–68 (AFSY…EIDP), 72–105 (SYIL…NPAL), and 120–153 (GEQA…APSN).

Belongs to the Ycf3 family.

Its subcellular location is the plastid. It localises to the chloroplast thylakoid membrane. Essential for the assembly of the photosystem I (PSI) complex. May act as a chaperone-like factor to guide the assembly of the PSI subunits. The polypeptide is Photosystem I assembly protein Ycf3 (Chaetosphaeridium globosum (Charophycean green alga)).